A 364-amino-acid polypeptide reads, in one-letter code: Fructose-bisphosphate aldolase B (364 aa).

At Ala2 the chain carries N-acetylalanine. Residue Lys13 is modified to N6-succinyllysine. Residue Ser36 is modified to Phosphoserine. Thr39 carries the post-translational modification Phosphothreonine. Arg43 contributes to the beta-D-fructose 1,6-bisphosphate binding site. Ser89 bears the Phosphoserine mark. Phosphothreonine is present on Thr119. At Lys121 the chain carries N6-succinyllysine. Ser132 bears the Phosphoserine mark. Glu188 (proton acceptor) is an active-site residue. Lys230 serves as the catalytic Schiff-base intermediate with dihydroxyacetone-P. A phosphoserine mark is found at Ser272, Ser276, Ser299, and Ser301. 272–274 (SGG) is a beta-D-fructose 1,6-bisphosphate binding site. Arg304 lines the beta-D-fructose 1,6-bisphosphate pocket. Ser309 bears the Phosphoserine mark. At Lys317 the chain carries N6-succinyllysine.

Belongs to the class I fructose-bisphosphate aldolase family. In terms of assembly, homotetramer. Interacts with BBS1, BBS2, BBS4 and BBS7. Forms a ternary complex with G6PD and TP53; this interaction is direct.

Its subcellular location is the cytoplasm. It is found in the cytosol. The protein localises to the cytoskeleton. It localises to the microtubule organizing center. The protein resides in the centrosome. Its subcellular location is the centriolar satellite. It carries out the reaction beta-D-fructose 1,6-bisphosphate = D-glyceraldehyde 3-phosphate + dihydroxyacetone phosphate. The catalysed reaction is beta-D-fructose 1-phosphate = D-glyceraldehyde + dihydroxyacetone phosphate. The protein operates within carbohydrate degradation; glycolysis; D-glyceraldehyde 3-phosphate and glycerone phosphate from D-glucose: step 4/4. It functions in the pathway carbohydrate biosynthesis; gluconeogenesis. It participates in carbohydrate metabolism; fructose metabolism. Catalyzes the aldol cleavage of fructose 1,6-biphosphate to form two triosephosphates dihydroxyacetone phosphate and D-glyceraldehyde 3-phosphate in glycolysis as well as the reverse stereospecific aldol addition reaction in gluconeogenesis. In fructolysis, metabolizes fructose 1-phosphate derived from the phosphorylation of dietary fructose by fructokinase into dihydroxyacetone phosphate and D-glyceraldehyde. Acts as an adapter independently of its enzymatic activity, exerts a tumor suppressor role by stabilizing the ternary complex with G6PD and TP53 to inhibit G6PD activity and keep oxidative pentose phosphate metabolism in check. In Oryctolagus cuniculus (Rabbit), this protein is Fructose-bisphosphate aldolase B (ALDOB).